We begin with the raw amino-acid sequence, 218 residues long: Hypoxanthine-guanine phosphoribosyltransferase (218 aa).

Residue K69 coordinates GMP. K103 bears the N6-acetyllysine mark. K115 is covalently cross-linked (Glycyl lysine isopeptide (Lys-Gly) (interchain with G-Cter in SUMO1); alternate). K115 participates in a covalent cross-link: Glycyl lysine isopeptide (Lys-Gly) (interchain with G-Cter in SUMO2); alternate. GMP is bound by residues 134-142 (EDIIDTGKT), K166, 186-188 (KFV), and D194. The active-site Proton acceptor is the D138. Residue T142 is modified to Phosphothreonine. D194 serves as a coordination point for Mg(2+).

This sequence belongs to the purine/pyrimidine phosphoribosyltransferase family. As to quaternary structure, homotetramer. The cofactor is Mg(2+).

The protein localises to the cytoplasm. It catalyses the reaction IMP + diphosphate = hypoxanthine + 5-phospho-alpha-D-ribose 1-diphosphate. It carries out the reaction GMP + diphosphate = guanine + 5-phospho-alpha-D-ribose 1-diphosphate. It functions in the pathway purine metabolism; IMP biosynthesis via salvage pathway; IMP from hypoxanthine: step 1/1. Its function is as follows. Converts guanine to guanosine monophosphate, and hypoxanthine to inosine monophosphate. Transfers the 5-phosphoribosyl group from 5-phosphoribosylpyrophosphate onto the purine. Plays a central role in the generation of purine nucleotides through the purine salvage pathway. In Mus musculus (Mouse), this protein is Hypoxanthine-guanine phosphoribosyltransferase (Hprt1).